We begin with the raw amino-acid sequence, 284 residues long: MDFIRAIILGIIEGITEWLPISSTGHLIIADEFIRLNQSAAFKEMFDVVIQLGAILSVVVLYFHKLNPFNKLNPADKQKTPREIQLTWRLWLKVLIAALPAAIIGLPLNDWLDKHFYHFVPVAFMLIIYGVAFIVIERRWVPNHEFSVMDIDRLPYRAALYIDLFQVLSLLPGTSRSGATIVGALLIGVSREVAAEFTFFLGIPVMFGASFIKILHFFKNGNSLNFEQFGVLLVACLVAFGVSMVAIKFLTDYVKKHDFTFFGKYRIVLGIVLLIYAAFKAFLG.

The next 8 helical transmembrane spans lie at 7–27, 44–64, 90–110, 116–136, 167–187, 197–217, 229–249, and 259–279; these read IILG…TGHL, EMFD…LYFH, LWLK…PLND, FYHF…FIVI, VLSL…ALLI, FTFF…ILHF, FGVL…AIKF, and FTFF…YAAF.

Belongs to the UppP family.

It localises to the cell membrane. It catalyses the reaction di-trans,octa-cis-undecaprenyl diphosphate + H2O = di-trans,octa-cis-undecaprenyl phosphate + phosphate + H(+). Functionally, catalyzes the dephosphorylation of undecaprenyl diphosphate (UPP). Confers resistance to bacitracin. The sequence is that of Undecaprenyl-diphosphatase from Lactococcus lactis subsp. cremoris (strain MG1363).